A 121-amino-acid polypeptide reads, in one-letter code: Basic phospholipase A2 BmjeTX-I (121 aa).

7 disulfides stabilise this stretch: Cys26-Cys114, Cys28-Cys45, Cys44-Cys95, Cys50-Cys121, Cys51-Cys88, Cys58-Cys82, and Cys76-Cys86. Positions 27, 29, and 31 each coordinate Ca(2+). Residue His48 is part of the active site. A Ca(2+)-binding site is contributed by Asp49. The active site involves Asp89.

Ca(2+) serves as cofactor. As to expression, expressed by the venom gland.

The protein resides in the secreted. It carries out the reaction a 1,2-diacyl-sn-glycero-3-phosphocholine + H2O = a 1-acyl-sn-glycero-3-phosphocholine + a fatty acid + H(+). Its function is as follows. Snake venom phospholipase A2 (PLA2) that induces a slight blockade of neuromuscular contraction in an indirectly stimulated chick biventer cervicis nerve-muscle preparation. Does not inhibit contraction of chick biventer cervicic nerve-muscle preparation in response to treatment with acetylcholine or KCl. The neuromuscular blockade is mediated by inhibitory action at the presynaptic motor nerve endings. Lyses skeletal myoblasts and myotubes in vitro, and intramuscular injection causes local muscle necrosis. Induces edema in the mouse foot pad. Induces a transient increase of IL-6 levels. PLA2 catalyzes the calcium-dependent hydrolysis of the 2-acyl groups in 3-sn-phosphoglycerides. In Bothrops marajoensis (Marajo lancehead), this protein is Basic phospholipase A2 BmjeTX-I.